The primary structure comprises 174 residues: Translation initiation factor IF-3 (174 aa).

It belongs to the IF-3 family. In terms of assembly, monomer.

It localises to the cytoplasm. Functionally, IF-3 binds to the 30S ribosomal subunit and shifts the equilibrium between 70S ribosomes and their 50S and 30S subunits in favor of the free subunits, thus enhancing the availability of 30S subunits on which protein synthesis initiation begins. This chain is Translation initiation factor IF-3, found in Xanthobacter autotrophicus (strain ATCC BAA-1158 / Py2).